The primary structure comprises 165 residues: Crossover junction endodeoxyribonuclease RuvC (165 aa).

Active-site residues include Asp-6, Glu-67, and Asp-142. Mg(2+) is bound by residues Asp-6, Glu-67, and Asp-142.

This sequence belongs to the RuvC family. As to quaternary structure, homodimer which binds Holliday junction (HJ) DNA. The HJ becomes 2-fold symmetrical on binding to RuvC with unstacked arms; it has a different conformation from HJ DNA in complex with RuvA. In the full resolvosome a probable DNA-RuvA(4)-RuvB(12)-RuvC(2) complex forms which resolves the HJ. Requires Mg(2+) as cofactor.

The protein resides in the cytoplasm. It catalyses the reaction Endonucleolytic cleavage at a junction such as a reciprocal single-stranded crossover between two homologous DNA duplexes (Holliday junction).. In terms of biological role, the RuvA-RuvB-RuvC complex processes Holliday junction (HJ) DNA during genetic recombination and DNA repair. Endonuclease that resolves HJ intermediates. Cleaves cruciform DNA by making single-stranded nicks across the HJ at symmetrical positions within the homologous arms, yielding a 5'-phosphate and a 3'-hydroxyl group; requires a central core of homology in the junction. The consensus cleavage sequence is 5'-(A/T)TT(C/G)-3'. Cleavage occurs on the 3'-side of the TT dinucleotide at the point of strand exchange. HJ branch migration catalyzed by RuvA-RuvB allows RuvC to scan DNA until it finds its consensus sequence, where it cleaves and resolves the cruciform DNA. The chain is Crossover junction endodeoxyribonuclease RuvC from Chlamydia abortus (strain DSM 27085 / S26/3) (Chlamydophila abortus).